Reading from the N-terminus, the 137-residue chain is Large ribosomal subunit protein uL16 (137 aa).

It belongs to the universal ribosomal protein uL16 family. In terms of assembly, part of the 50S ribosomal subunit.

Functionally, binds 23S rRNA and is also seen to make contacts with the A and possibly P site tRNAs. In Xanthomonas axonopodis pv. citri (strain 306), this protein is Large ribosomal subunit protein uL16.